A 227-amino-acid chain; its full sequence is ATP synthase subunit a (227 aa).

The next 6 membrane-spanning stretches (helical) occupy residues Leu-14–Phe-34, Trp-69–Phe-89, Gln-98–Phe-118, Leu-137–Leu-157, His-169–Leu-189, and Ile-205–Leu-223.

This sequence belongs to the ATPase A chain family. F-type ATPases have 2 components, CF(1) - the catalytic core - and CF(0) - the membrane proton channel. CF(1) has five subunits: alpha(3), beta(3), gamma(1), delta(1), epsilon(1). CF(0) has three main subunits: a, b and c.

The protein resides in the mitochondrion inner membrane. In terms of biological role, mitochondrial membrane ATP synthase (F(1)F(0) ATP synthase or Complex V) produces ATP from ADP in the presence of a proton gradient across the membrane which is generated by electron transport complexes of the respiratory chain. F-type ATPases consist of two structural domains, F(1) - containing the extramembraneous catalytic core and F(0) - containing the membrane proton channel, linked together by a central stalk and a peripheral stalk. During catalysis, ATP synthesis in the catalytic domain of F(1) is coupled via a rotary mechanism of the central stalk subunits to proton translocation. Key component of the proton channel; it may play a direct role in the translocation of protons across the membrane. The sequence is that of ATP synthase subunit a (ATP6) from Branchiostoma floridae (Florida lancelet).